A 53-amino-acid chain; its full sequence is UPF0391 membrane protein ESA_03375 (53 aa).

Helical transmembrane passes span 4–24 (WGII…GGLA) and 28–48 (AGAA…SLFM).

It belongs to the UPF0391 family.

The protein localises to the cell membrane. The chain is UPF0391 membrane protein ESA_03375 from Cronobacter sakazakii (strain ATCC BAA-894) (Enterobacter sakazakii).